The following is a 133-amino-acid chain: NADPH-dependent 7-cyano-7-deazaguanine reductase (133 aa).

Cysteine 46 functions as the Thioimide intermediate in the catalytic mechanism. Residue aspartate 53 is the Proton donor of the active site. Substrate is bound by residues 68–70 (VEL) and 87–88 (HE).

Belongs to the GTP cyclohydrolase I family. QueF type 1 subfamily.

The protein localises to the cytoplasm. The catalysed reaction is 7-aminomethyl-7-carbaguanine + 2 NADP(+) = 7-cyano-7-deazaguanine + 2 NADPH + 3 H(+). The protein operates within tRNA modification; tRNA-queuosine biosynthesis. In terms of biological role, catalyzes the NADPH-dependent reduction of 7-cyano-7-deazaguanine (preQ0) to 7-aminomethyl-7-deazaguanine (preQ1). This is NADPH-dependent 7-cyano-7-deazaguanine reductase from Parasynechococcus marenigrum (strain WH8102).